A 1196-amino-acid chain; its full sequence is ATP-dependent helicase/deoxyribonuclease subunit B (1196 aa).

Cysteine 823, cysteine 1149, cysteine 1152, and cysteine 1158 together coordinate [4Fe-4S] cluster.

The protein belongs to the helicase family. AddB/RexB type 2 subfamily. In terms of assembly, heterodimer of AddA and RexB. The cofactor is Mg(2+). It depends on [4Fe-4S] cluster as a cofactor.

The heterodimer acts as both an ATP-dependent DNA helicase and an ATP-dependent, dual-direction single-stranded exonuclease. Recognizes the chi site generating a DNA molecule suitable for the initiation of homologous recombination. This subunit has 5' -&gt; 3' nuclease activity but not helicase activity. This chain is ATP-dependent helicase/deoxyribonuclease subunit B, found in Enterococcus faecalis (strain ATCC 700802 / V583).